The chain runs to 1012 residues: MTNLSDQTQQIVPFIRSLLMPTTGPASIPDDTLEKHTLRSETSTYNLTVGDTGSGLIVFFPGFPGSIVGAHYTMQSNGNYKFDQMLLTAQNLPASYNYCRLVSRSLTVRSSTLPGGVYALNGTINAVTFQGSLSELTDVSYNGLMSATANINDKIGNVLVGEGVTVLSLPTSYDLGYVRLGDPIPAIGLDPKMVATCDSSDRPRVYTITAADDYQFSSQYQPGGVTITLFSANIDAITNLSVGGELVFQTSVQGLVLNATIYLVGFDGTTVTTRAVAAGNGLTAGTDNLMPFNLVIPTSEITQPVTSIKLEIVTSKSGGQAGDQMSWLASGNLAVTIHGGNYPGALRPVTLVAYERVATGSVVTVAGVSNFELIPNPELAKNLVTEYGRFDPGAMNYTKLILSERDRLGIKTVWPTREYTDFREYFMEVADLNSPLKIAGAFGFKDIIRAIRRIAVPVVSTLFPPAAPLAHAIGEGVDYLLGDEAGAASGTARAASGKARAASGRIRQLTLAADKGYEVVANLFQVPQNPVVDGILASPGVLRGAHNLDCVLREGATLFPVVITTVEDAMTPKALNSKMFAVIEGVREDLQPPSQRGSFIRTLSGHRVYGYAPDGVLPLETGRDYTVVPIDDVWDDSIMLSKDPIPPIVGNSGNLAIAYMDVFRPKVPIHVAMTGALNAYGEVEKVSFRSTKLATAHRLGLKLAGPGAFDINTGPNWATFIKRFPHNPRDWDRLPYLNLPYLPPSAGRQYHLAMAASEFKETPELESAVRAMEAAADVDPLFQSALSVFMWLEENGIVTDMANFALSDPNAHRMRNFLANAPQAGSKSQRAKYGTAGYGVEARGPTPEEAQREKDTRISKKMEAMGIYFATPEWVALNGHRGPSPGQLKYWQNTREIPDPNEDYLDYVHAEKSRLASEEQILRAATSIYGAPGQAEPPQAFIDEVAKVYEINHGRGPNQEQMKDLLLTAMEMKHRNPRRAPPKPKPKPNAPSQRPPGRLGRWIRTVSDEDLE.

Position 30 (D30) interacts with a divalent metal cation. The 243-residue stretch at 513–755 (ADKGYEVVAN…AGRQYHLAMA (243 aa)) folds into the Peptidase S50 domain. S652 (nucleophile) is an active-site residue. Residue K692 is part of the active site. A disordered region spans residues 970-1012 (MEMKHRNPRRAPPKPKPKPNAPSQRPPGRLGRWIRTVSDEDLE). The segment covering 975 to 986 (RNPRRAPPKPKP) has biased composition (basic residues). Positions 1003 to 1012 (IRTVSDEDLE) are interaction with VP1 protein.

As to quaternary structure, homotrimer. A central divalent metal stabilizes the VP2 trimer. Interacts with host ITGA4/ITGB1. In terms of assembly, homodimer. Interacts (via C-terminus) with VP1 in the cytoplasm. Interacts with VP2. Post-translationally, specific enzymatic cleavages yield mature proteins. The capsid assembly seems to be regulated by polyprotein processing. The protease VP4 cleaves itself off the polyprotein, thus releasing pre-VP2 and VP3 within the infected cell. During capsid assembly, the C-terminus of pre-VP2 is further processed by VP4, giving rise to VP2, the external capsid protein and three small peptides that all stay closely associated with the capsid.

The protein localises to the virion. It localises to the host cytoplasm. Capsid protein VP2 self assembles to form an icosahedral capsid with a T=13 symmetry, about 70 nm in diameter, and consisting of 260 VP2 trimers. The capsid encapsulates the genomic dsRNA. VP2 is also involved in attachment and entry into the host cell by interacting with host ITGA4/ITGB1. Functionally, the precursor of VP2 plays an important role in capsid assembly. First, pre-VP2 and VP2 oligomers assemble to form a procapsid. Then, the pre-VP2 intermediates may be processed into VP2 proteins by proteolytic cleavage mediated by VP4 to obtain the mature virion. The final capsid is composed of pentamers and hexamers but VP2 has a natural tendency to assemble into all-pentameric structures. Therefore pre-VP2 may be required to allow formation of the hexameric structures. Its function is as follows. Protease VP4 is a serine protease that cleaves the polyprotein into its final products. Pre-VP2 is first partially cleaved, and may be completely processed by VP4 upon capsid maturation. In terms of biological role, capsid protein VP3 plays a key role in virion assembly by providing a scaffold for the capsid made of VP2. May self-assemble to form a T=4-like icosahedral inner-capsid composed of at least 180 trimers. Plays a role in genomic RNA packaging by recruiting VP1 into the capsid and interacting with the dsRNA genome segments to form a ribonucleoprotein complex. Additionally, the interaction of the VP3 C-terminal tail with VP1 removes the inherent structural blockade of the polymerase active site. Thus, VP3 can also function as a transcriptional activator. Structural peptide 1 is a small peptide derived from pre-VP2 C-terminus. It destabilizes and perforates cell membranes, suggesting a role during entry. Functionally, structural peptide 2 is a small peptide derived from pVP2 C-terminus. It is not essential for the virus viability, but viral growth is affected when missing. Its function is as follows. Structural peptide 3 is a small peptide derived from pVP2 C-terminus. It is not essential for the virus viability, but viral growth is affected when missing. In terms of biological role, structural peptide 4 is a small peptide derived from pVP2 C-terminus. It is essential for the virus viability. This Avian infectious bursal disease virus (strain Australian 002-73) (IBDV) protein is Structural polyprotein.